The following is a 323-amino-acid chain: Aldo-keto reductase family 1 member C1 (323 aa).

NADP(+) is bound by residues 20-24 (GFGTY) and aspartate 50. Tyrosine 24 contacts substrate. The Proton donor role is filled by tyrosine 55. Histidine 117 lines the substrate pocket. NADP(+) is bound by residues 166–167 (SN), glutamine 190, and 216–222 (YSALGSH). 2 residues coordinate substrate: histidine 222 and tryptophan 227. 270–280 (KSYNEQRIREN) is an NADP(+) binding site.

It belongs to the aldo/keto reductase family. In terms of assembly, monomer. In terms of tissue distribution, expressed in liver, adrenal gland, intestine and kidney.

It localises to the cytoplasm. Its subcellular location is the cytosol. The enzyme catalyses a 3alpha-hydroxysteroid + NADP(+) = a 3-oxosteroid + NADPH + H(+). It catalyses the reaction a 3alpha-hydroxysteroid + NAD(+) = a 3-oxosteroid + NADH + H(+). The catalysed reaction is (17R,20S)-17,20-dihydroxypregn-4-en-3-one + NADP(+) = 17alpha-hydroxyprogesterone + NADPH + H(+). It carries out the reaction (17R,20S)-17,20-dihydroxypregn-4-en-3-one + NAD(+) = 17alpha-hydroxyprogesterone + NADH + H(+). The enzyme catalyses (20S)-hydroxypregn-4-en-3-one + NADP(+) = progesterone + NADPH + H(+). It catalyses the reaction (20S)-hydroxypregn-4-en-3-one + NAD(+) = progesterone + NADH + H(+). The catalysed reaction is (1R,2R)-1,2-dihydrobenzene-1,2-diol + NADP(+) = catechol + NADPH + H(+). It carries out the reaction (S)-indan-1-ol + NAD(+) = indan-1-one + NADH + H(+). The enzyme catalyses (S)-indan-1-ol + NADP(+) = indan-1-one + NADPH + H(+). It catalyses the reaction 5alpha-androstane-3alpha,17beta-diol + NADP(+) = 17beta-hydroxy-5alpha-androstan-3-one + NADPH + H(+). The catalysed reaction is 5alpha-androstane-3beta,17beta-diol + NADP(+) = 17beta-hydroxy-5alpha-androstan-3-one + NADPH + H(+). It carries out the reaction 5alpha-androstane-3alpha,17beta-diol + NAD(+) = 17beta-hydroxy-5alpha-androstan-3-one + NADH + H(+). The enzyme catalyses 17beta-hydroxy-5alpha-androstan-3-one + NADP(+) = 5alpha-androstan-3,17-dione + NADPH + H(+). It catalyses the reaction androsterone + NADP(+) = 5alpha-androstan-3,17-dione + NADPH + H(+). The catalysed reaction is androsterone + NADPH + H(+) = 5alpha-androstane-3alpha,17beta-diol + NADP(+). It carries out the reaction 5alpha-androstane-3alpha,17beta-diol + NAD(+) = androsterone + NADH + H(+). The enzyme catalyses 17beta-estradiol + NADP(+) = estrone + NADPH + H(+). It catalyses the reaction 17beta-estradiol + NAD(+) = estrone + NADH + H(+). The catalysed reaction is testosterone + NADP(+) = androst-4-ene-3,17-dione + NADPH + H(+). It carries out the reaction 20alpha-hydroxy-5beta-pregnan-3-one + NADP(+) = 5beta-pregnan-3,20-dione + NADPH + H(+). The enzyme catalyses 3beta-hydroxy-5beta-pregnane-20-one + NADP(+) = 5beta-pregnan-3,20-dione + NADPH + H(+). It catalyses the reaction 3beta-hydroxy-5beta-pregnane-20-one + NADPH + H(+) = 3beta,20alpha-dihydroxy-5beta-pregnane + NADP(+). The catalysed reaction is (3beta,5alpha,17beta)-3-hydroxyandrostan-17-yl sulfate + NADP(+) = 5alpha-dihydrotestosterone sulfate + NADPH + H(+). The protein operates within steroid metabolism. In terms of biological role, cytosolic aldo-keto reductase that catalyzes the NADH and NADPH-dependent reduction of ketosteroids to hydroxysteroids. Most probably acts as a reductase in vivo since the oxidase activity measured in vitro is inhibited by physiological concentrations of NADPH. Displays a broad positional specificity acting on positions 3, 17 and 20 of steroids and regulates the metabolism of hormones like estrogens and androgens. May also reduce conjugated steroids such as 5alpha-dihydrotestosterone sulfate. Displays affinity for bile acids. The sequence is that of Aldo-keto reductase family 1 member C1 (AKR1C1) from Macaca fuscata fuscata (Japanese macaque).